We begin with the raw amino-acid sequence, 558 residues long: Urocanate hydratase (558 aa).

NAD(+) is bound by residues Gly50–Gly51, Gln128, Gly174–Gly176, Glu194, Arg199, Asn240–Ala241, Gln261–His265, Tyr271–Ile272, and Tyr320. Cys408 is an active-site residue. Residue Gly490 coordinates NAD(+).

The protein belongs to the urocanase family. It depends on NAD(+) as a cofactor.

The protein resides in the cytoplasm. The catalysed reaction is 4-imidazolone-5-propanoate = trans-urocanate + H2O. The protein operates within amino-acid degradation; L-histidine degradation into L-glutamate; N-formimidoyl-L-glutamate from L-histidine: step 2/3. Functionally, catalyzes the conversion of urocanate to 4-imidazolone-5-propionate. The sequence is that of Urocanate hydratase from Deinococcus radiodurans (strain ATCC 13939 / DSM 20539 / JCM 16871 / CCUG 27074 / LMG 4051 / NBRC 15346 / NCIMB 9279 / VKM B-1422 / R1).